A 65-amino-acid chain; its full sequence is Potassium channel toxin alpha-KTx 12.6 (65 aa).

An N-terminal signal peptide occupies residues 1-22; it reads MKMKIFIITIVIALFITSIVEA. Intrachain disulfides connect Cys30–Cys51, Cys36–Cys56, and Cys40–Cys58.

The protein belongs to the short scorpion toxin superfamily. Potassium channel inhibitor family. Alpha-KTx 12 subfamily. As to expression, expressed by the venom gland.

Its subcellular location is the secreted. In terms of biological role, inhibits voltage-gated potassium channels. This is Potassium channel toxin alpha-KTx 12.6 from Lychas mucronatus (Chinese swimming scorpion).